The primary structure comprises 155 residues: Small ribosomal subunit protein uS7cz/uS7cy (155 aa).

This sequence belongs to the universal ribosomal protein uS7 family. As to quaternary structure, part of the 30S ribosomal subunit.

It is found in the plastid. Its subcellular location is the chloroplast. One of the primary rRNA binding proteins, it binds directly to 16S rRNA where it nucleates assembly of the head domain of the 30S subunit. The chain is Small ribosomal subunit protein uS7cz/uS7cy (rps7-A) from Jasminum nudiflorum (Winter jasmine).